A 391-amino-acid polypeptide reads, in one-letter code: Stearoyl-[acyl-carrier-protein] 9-desaturase 6, chloroplastic (391 aa).

Residues 1–38 (MLAHKSLLSFTTQWATLMPSPSTFLASRPRGPAKISAV) constitute a chloroplast transit peptide. Fe cation-binding residues include Glu130, Glu168, His171, Glu221, Glu254, and His257.

It belongs to the fatty acid desaturase type 2 family. In terms of assembly, homodimer. It depends on Fe(2+) as a cofactor.

It is found in the plastid. The protein localises to the chloroplast. The catalysed reaction is octadecanoyl-[ACP] + 2 reduced [2Fe-2S]-[ferredoxin] + O2 + 2 H(+) = (9Z)-octadecenoyl-[ACP] + 2 oxidized [2Fe-2S]-[ferredoxin] + 2 H2O. It functions in the pathway lipid metabolism; fatty acid metabolism. Converts stearoyl-ACP to oleoyl-ACP by introduction of a cis double bond between carbons 9 and 10 of the acyl chain. In Arabidopsis thaliana (Mouse-ear cress), this protein is Stearoyl-[acyl-carrier-protein] 9-desaturase 6, chloroplastic (S-ACP-DES6).